A 356-amino-acid chain; its full sequence is Dihydroorotate dehydrogenase (quinone) (356 aa).

FMN is bound by residues 67–71 (PGFDK) and threonine 91. Lysine 71 contacts substrate. 116–120 (NRMGF) is a substrate binding site. FMN-binding residues include asparagine 147 and asparagine 178. Position 178 (asparagine 178) interacts with substrate. Catalysis depends on serine 181, which acts as the Nucleophile. Asparagine 183 serves as a coordination point for substrate. Positions 218 and 246 each coordinate FMN. Substrate is bound at residue 247 to 248 (NT). FMN-binding positions include glycine 268, glycine 297, and 318–319 (YS).

It belongs to the dihydroorotate dehydrogenase family. Type 2 subfamily. Monomer. It depends on FMN as a cofactor.

Its subcellular location is the cell membrane. It carries out the reaction (S)-dihydroorotate + a quinone = orotate + a quinol. It functions in the pathway pyrimidine metabolism; UMP biosynthesis via de novo pathway; orotate from (S)-dihydroorotate (quinone route): step 1/1. Catalyzes the conversion of dihydroorotate to orotate with quinone as electron acceptor. The sequence is that of Dihydroorotate dehydrogenase (quinone) from Sphingopyxis alaskensis (strain DSM 13593 / LMG 18877 / RB2256) (Sphingomonas alaskensis).